A 144-amino-acid chain; its full sequence is Small ribosomal subunit protein bS6 (144 aa).

Residues 97–144 (DTEQSLIMKSKDEKGDKPERSERRRRDDEEVDAAPAATDTDGDNAEAA) form a disordered region. The span at 105–124 (KSKDEKGDKPERSERRRRDD) shows a compositional bias: basic and acidic residues.

Belongs to the bacterial ribosomal protein bS6 family.

Binds together with bS18 to 16S ribosomal RNA. This chain is Small ribosomal subunit protein bS6, found in Xanthomonas campestris pv. campestris (strain B100).